The chain runs to 668 residues: Beta-galactosidase (668 aa).

An N-terminal signal peptide occupies residues 1 to 24 (MARPAAVRVLWALLLPLLLGSARG). The propeptide occupies 25-29 (LRNAS). The substrate site is built by tyrosine 84, glutamate 130, and asparagine 188. Residue glutamate 189 is the Proton donor of the active site. Residues cysteine 196 and cysteine 231 are joined by a disulfide bond. Asparagine 248 carries an N-linked (GlcNAc...) asparagine glycan. The active-site Nucleophile is glutamate 269. Tyrosine 334 serves as a coordination point for substrate. Residues asparagine 465, asparagine 499, asparagine 546, and asparagine 556 are each glycosylated (N-linked (GlcNAc...) asparagine). Cysteine 627 and cysteine 635 are joined by a disulfide.

The protein belongs to the glycosyl hydrolase 35 family. Homodimer. May form higher multimers.

The protein resides in the lysosome. The catalysed reaction is Hydrolysis of terminal non-reducing beta-D-galactose residues in beta-D-galactosides.. Cleaves beta-linked terminal galactosyl residues from gangliosides, glycoproteins, and glycosaminoglycans. This is Beta-galactosidase (GLB1) from Canis lupus familiaris (Dog).